The primary structure comprises 648 residues: DNA mismatch repair protein MutL (648 aa).

Positions 385-430 (STVKGPAVNEPLTENTLNQQKVKTSASTPVVHTGNSVEPKPETSTA) are disordered. The segment covering 396 to 430 (LTENTLNQQKVKTSASTPVVHTGNSVEPKPETSTA) has biased composition (polar residues).

This sequence belongs to the DNA mismatch repair MutL/HexB family.

Its function is as follows. This protein is involved in the repair of mismatches in DNA. It is required for dam-dependent methyl-directed DNA mismatch repair. May act as a 'molecular matchmaker', a protein that promotes the formation of a stable complex between two or more DNA-binding proteins in an ATP-dependent manner without itself being part of a final effector complex. This Agathobacter rectalis (strain ATCC 33656 / DSM 3377 / JCM 17463 / KCTC 5835 / VPI 0990) (Eubacterium rectale) protein is DNA mismatch repair protein MutL.